Reading from the N-terminus, the 184-residue chain is TRAF-interacting protein with FHA domain-containing protein A (184 aa).

Residue T9 is modified to Phosphothreonine. One can recognise an FHA domain in the interval 47 to 103 (VKFGRNSNMCQYTFQDKQVSRIQFVLQPFKQFNSSVLSFEIKNMSKKTSLMVDNQEL). The disordered stretch occupies residues 152 to 184 (NNWPTQNPIPEDGMYSSYFTHRSSPSEMDENEL). Residues 168–177 (SYFTHRSSPS) show a composition bias toward polar residues.

This sequence belongs to the TIFA family. In terms of assembly, homooligomer; homooligomerizes following phosphorylation at Thr-9. Interacts with IRAK1, TRAF2 and TRAF6. Interacts with TIFAB; binding to TIFAB inhibits TRAF6 activation, possibly by inducing a conformational change in TIFA. Interacts with ZCCHC11; binding to ZCCHC11 suppresses the TRAF6-dependent activation of NF-kappa-B. Post-translationally, phosphorylated at Thr-9 following detection of ADP-D-glycero-beta-D-manno-heptose (ADP-Heptose) by ALPK1. Phosphorylation at Thr-9 by ALPK1 leads to the formation of an intermolecular binding between the FHA domain and phosphorylated Thr-9, promoting TIFA oligomerization and TIFA-mediated NF-kappa-B activation. Highly expressed in the spleen and at lower levels in heart, brain, lung, liver, kidney and testes.

Its subcellular location is the cytoplasm. Functionally, adapter molecule that plays a key role in the activation of pro-inflammatory NF-kappa-B signaling following detection of bacterial pathogen-associated molecular pattern metabolites (PAMPs). Promotes activation of an innate immune response by inducing the oligomerization and polyubiquitination of TRAF6, which leads to the activation of TAK1 and IKK through a proteasome-independent mechanism. TIFA-dependent innate immune response is triggered by ADP-D-glycero-beta-D-manno-heptose (ADP-Heptose), a potent PAMP present in all Gram-negative and some Gram-positive bacteria: ADP-Heptose is recognized by ALPK1, which phosphorylates TIFA at Thr-9, leading to TIFA homooligomerization and subsequent activation of pro-inflammatory NF-kappa-B signaling. The chain is TRAF-interacting protein with FHA domain-containing protein A from Mus musculus (Mouse).